We begin with the raw amino-acid sequence, 241 residues long: Uridylate kinase (241 aa).

12 to 15 (KLSG) is an ATP binding site. Residue Gly-54 participates in UMP binding. ATP-binding residues include Gly-55 and Arg-59. UMP contacts are provided by residues Asp-74 and 135-142 (VGAPYFTT). The ATP site is built by Thr-162, Tyr-168, and Asp-171.

This sequence belongs to the UMP kinase family. Homohexamer.

The protein localises to the cytoplasm. The catalysed reaction is UMP + ATP = UDP + ADP. It participates in pyrimidine metabolism; CTP biosynthesis via de novo pathway; UDP from UMP (UMPK route): step 1/1. Its activity is regulated as follows. Inhibited by UTP. Its function is as follows. Catalyzes the reversible phosphorylation of UMP to UDP. The sequence is that of Uridylate kinase from Sphingopyxis alaskensis (strain DSM 13593 / LMG 18877 / RB2256) (Sphingomonas alaskensis).